The sequence spans 382 residues: Glycerate kinase (382 aa).

It belongs to the glycerate kinase type-1 family.

The enzyme catalyses (R)-glycerate + ATP = (2R)-3-phosphoglycerate + ADP + H(+). The chain is Glycerate kinase (glxK) from Bacillus subtilis (strain 168).